The following is a 119-amino-acid chain: MESKEELAANNLNGENAQQENEGREQAPTQNEETRHLGGGEGQKPGGNIRRGRVRRLVPNFRWAIPNRHIEHNEARDDVERFVGQMMEIKRKTREQQMRHYMRFQTPEPDNHYDFCLIP.

The interval methionine 1–arginine 53 is disordered. Residues alanine 8 to glutamate 20 show a composition bias toward low complexity. Residues asparagine 31–isoleucine 89 form an interaction with SIRT2 region. The segment at asparagine 31–proline 119 is interaction with alpha-tubulin. Cysteine 116 serves as a coordination point for Zn(2+).

The protein belongs to the BEX family. As to quaternary structure, interacts with alpha-tubulin. Interacts with SIRT2. In terms of processing, ubiquitinated and degraded by the proteasome.

The protein localises to the cytoplasm. It is found in the cytoskeleton. Its subcellular location is the spindle pole. The protein resides in the nucleus. Its function is as follows. May play a role in microtubule deacetylation by negatively regulating the SIRT2 deacetylase activity toward alpha-tubulin and thereby participate in the control of cell cycle progression and genomic stability. In absence of reductive stress, acts as a pseudosubstrate for the CRL2(FEM1B) complex: associates with FEM1B via zinc, thereby preventing association between FEM1B and its substrates. The protein is Protein BEX4 of Pongo abelii (Sumatran orangutan).